Consider the following 354-residue polypeptide: Nicotinate-nucleotide--dimethylbenzimidazole phosphoribosyltransferase (354 aa).

Glu319 serves as the catalytic Proton acceptor.

This sequence belongs to the CobT family.

The enzyme catalyses 5,6-dimethylbenzimidazole + nicotinate beta-D-ribonucleotide = alpha-ribazole 5'-phosphate + nicotinate + H(+). Its pathway is nucleoside biosynthesis; alpha-ribazole biosynthesis; alpha-ribazole from 5,6-dimethylbenzimidazole: step 1/2. Its function is as follows. Catalyzes the synthesis of alpha-ribazole-5'-phosphate from nicotinate mononucleotide (NAMN) and 5,6-dimethylbenzimidazole (DMB). The sequence is that of Nicotinate-nucleotide--dimethylbenzimidazole phosphoribosyltransferase from Pelodictyon phaeoclathratiforme (strain DSM 5477 / BU-1).